A 510-amino-acid chain; its full sequence is Chromosomal replication initiator protein DnaA (510 aa).

The segment at 1–107 (MTNDPGSGFA…VRIAPPPADD (107 aa)) is domain I, interacts with DnaA modulators. Positions 107-169 (DDDDSVAAAV…ADTSASAGGT (63 aa)) are domain II. The interval 119 to 168 (PGLEASPETSQEVSDEIDDFGENAPNSRQSWPTHFKKRSTDADTSASAGG) is disordered. A domain III, AAA+ region region spans residues 170-386 (SLNRRYTFDT…GALIRVTAFA (217 aa)). Residues glycine 214, glycine 216, lysine 217, and threonine 218 each contribute to the ATP site. The tract at residues 387–510 (SLNKTPIDKA…TTRIRQRSKR (124 aa)) is domain IV, binds dsDNA.

The protein belongs to the DnaA family. As to quaternary structure, oligomerizes as a right-handed, spiral filament on DNA at oriC.

It localises to the cytoplasm. Its function is as follows. Plays an essential role in the initiation and regulation of chromosomal replication. ATP-DnaA binds to the origin of replication (oriC) to initiate formation of the DNA replication initiation complex once per cell cycle. Binds the DnaA box (a 9 base pair repeat at the origin) and separates the double-stranded (ds)DNA. Forms a right-handed helical filament on oriC DNA; dsDNA binds to the exterior of the filament while single-stranded (ss)DNA is stabiized in the filament's interior. The ATP-DnaA-oriC complex binds and stabilizes one strand of the AT-rich DNA unwinding element (DUE), permitting loading of DNA polymerase. After initiation quickly degrades to an ADP-DnaA complex that is not apt for DNA replication. Binds acidic phospholipids. The sequence is that of Chromosomal replication initiator protein DnaA from Mycobacterium marinum (strain ATCC BAA-535 / M).